A 655-amino-acid polypeptide reads, in one-letter code: Kelch-like protein 13 (655 aa).

The 70-residue stretch at 92-161 (CDVTLMPGDT…IYTAKLSLNM (70 aa)) folds into the BTB domain. Residues 196–297 (CVEVGRIANT…TPQELINYVQ (102 aa)) form the BACK domain. 6 Kelch repeats span residues 341-389 (HLVT…VIGN), 390-441 (FLYV…ALKG), 442-488 (YLYA…VYGG), 490-535 (MYIS…TVGE), 537-587 (LYVI…VFEN), and 588-636 (KIYV…TLTV).

In terms of assembly, component of the BCR(KLHL9-KLHL13) E3 ubiquitin ligase complex, at least composed of CUL3, KLHL9, KLHL13 and RBX1. Interacts with AURKB.

It functions in the pathway protein modification; protein ubiquitination. In terms of biological role, substrate-specific adapter of a BCR (BTB-CUL3-RBX1) E3 ubiquitin-protein ligase complex required for mitotic progression and cytokinesis. The BCR(KLHL9-KLHL13) E3 ubiquitin ligase complex mediates the ubiquitination of AURKB and controls the dynamic behavior of AURKB on mitotic chromosomes and thereby coordinates faithful mitotic progression and completion of cytokinesis. The protein is Kelch-like protein 13 (KLHL13) of Homo sapiens (Human).